A 99-amino-acid polypeptide reads, in one-letter code: Small ribosomal subunit protein bS20 (99 aa).

It belongs to the bacterial ribosomal protein bS20 family.

Its function is as follows. Binds directly to 16S ribosomal RNA. The chain is Small ribosomal subunit protein bS20 from Caldicellulosiruptor bescii (strain ATCC BAA-1888 / DSM 6725 / KCTC 15123 / Z-1320) (Anaerocellum thermophilum).